The primary structure comprises 213 residues: 3-isopropylmalate dehydratase small subunit (213 aa).

The protein belongs to the LeuD family. LeuD type 1 subfamily. As to quaternary structure, heterodimer of LeuC and LeuD.

It catalyses the reaction (2R,3S)-3-isopropylmalate = (2S)-2-isopropylmalate. The protein operates within amino-acid biosynthesis; L-leucine biosynthesis; L-leucine from 3-methyl-2-oxobutanoate: step 2/4. Functionally, catalyzes the isomerization between 2-isopropylmalate and 3-isopropylmalate, via the formation of 2-isopropylmaleate. The sequence is that of 3-isopropylmalate dehydratase small subunit from Neisseria gonorrhoeae (strain ATCC 700825 / FA 1090).